A 277-amino-acid chain; its full sequence is MQLCGSSELLTETDLGESQKQLKKKQKNRVAAQRSRQKHTSKADALHQQHESLEKQNHALRKEIQALQTELAGWGRTLHLHERLCRVDCDPCPVLLPSGCPIQAKQPSGQPAPLGYNGCQEQLGLFQTPGSSPRAQHLSPGPCSHESPGLLPSLLPSLAFDPLMVRTPLAQLSPSPVLSASSPSGSSLLGSFSKLDPLIPSPQDQLAPPQPLRQEQPTSGRLASSDSPAALGPECSQNREHLPALPGSSTHWQKSSVAPSPQALMAFPLLSSAKVHF.

Disordered stretches follow at residues 15 to 50 (LGES…HQQH), 126 to 146 (FQTP…CSHE), and 191 to 256 (SFSK…QKSS). Residues 18–81 (SQKQLKKKQK…AGWGRTLHLH (64 aa)) form the bZIP domain. A basic motif region spans residues 20–42 (KQLKKKQKNRVAAQRSRQKHTSK). Residues 41–50 (SKADALHQQH) are compositionally biased toward basic and acidic residues. The interval 46-67 (LHQQHESLEKQNHALRKEIQAL) is leucine-zipper. Polar residues-rich tracts occupy residues 213–227 (RQEQ…SSDS) and 247–256 (GSSTHWQKSS).

This sequence belongs to the bZIP family. Heterodimer; heterodimerizes with JUN family proteins.

The protein resides in the nucleus. AP-1 family transcription factor that controls the differentiation of lineage-specific cells in the immune system. Selectively suppresses CCN1 transcription and hence blocks the downstream cell proliferation signals produced by CCN1 and inhibits CCN1-induced anchorage-independent growth and invasion in several cancer types. Possibly acts by interfering with AP-1 binding to CCN1 promoter. Following infection, participates in the differentiation of CD8(+) thymic conventional dendritic cells in the immune system. Acts via the formation of a heterodimer with JUN family proteins that recognizes and binds DNA sequence 5'-TGA[CG]TCA-3' and regulates expression of target genes. The chain is Basic leucine zipper transcriptional factor ATF-like 2 (Batf2) from Mus musculus (Mouse).